We begin with the raw amino-acid sequence, 478 residues long: ATP synthase subunit beta (478 aa).

ATP is bound at residue 152–159; sequence GGAGVGKT.

Belongs to the ATPase alpha/beta chains family. In terms of assembly, F-type ATPases have 2 components, CF(1) - the catalytic core - and CF(0) - the membrane proton channel. CF(1) has five subunits: alpha(3), beta(3), gamma(1), delta(1), epsilon(1). CF(0) has three main subunits: a(1), b(2) and c(9-12). The alpha and beta chains form an alternating ring which encloses part of the gamma chain. CF(1) is attached to CF(0) by a central stalk formed by the gamma and epsilon chains, while a peripheral stalk is formed by the delta and b chains.

The protein resides in the cell membrane. It carries out the reaction ATP + H2O + 4 H(+)(in) = ADP + phosphate + 5 H(+)(out). Functionally, produces ATP from ADP in the presence of a proton gradient across the membrane. The catalytic sites are hosted primarily by the beta subunits. This Wolbachia pipientis subsp. Culex pipiens (strain wPip) protein is ATP synthase subunit beta.